Consider the following 109-residue polypeptide: MARTNLQYPYKVLWCAQVKVVKTGLINFFAPSIQRQRERVCEGYLHETPLLLMQVVEREAITLAKTEFKNSFSNLHFFFLFWLLNFILFFRIHLYSCNFRMSIICEEYY.

A helical membrane pass occupies residues 75-95; it reads LHFFFLFWLLNFILFFRIHLY.

It localises to the membrane. This is an uncharacterized protein from Schizosaccharomyces pombe (strain 972 / ATCC 24843) (Fission yeast).